Consider the following 139-residue polypeptide: Putative pre-16S rRNA nuclease (139 aa).

This sequence belongs to the YqgF nuclease family.

It localises to the cytoplasm. In terms of biological role, could be a nuclease involved in processing of the 5'-end of pre-16S rRNA. This Legionella pneumophila subsp. pneumophila (strain Philadelphia 1 / ATCC 33152 / DSM 7513) protein is Putative pre-16S rRNA nuclease.